Consider the following 173-residue polypeptide: Oleosin 18.5 kDa (173 aa).

Positions Met1–Lys45 are polar. The hydrophobic stretch occupies residues Ala46–Tyr117. A run of 3 helical transmembrane segments spans residues Gly54–Ala74, Pro76–Ile96, and Thr97–Tyr117. Residues Tyr151 to Thr173 form a disordered region. Residues Gly158–Arg167 show a composition bias toward basic and acidic residues.

Belongs to the oleosin family.

Its subcellular location is the lipid droplet. The protein resides in the membrane. In terms of biological role, may have a structural role to stabilize the lipid body during desiccation of the seed by preventing coalescence of the oil. Probably interacts with both lipid and phospholipid moieties of lipid bodies. May also provide recognition signals for specific lipase anchorage in lipolysis during seedling growth. This chain is Oleosin 18.5 kDa, found in Arabidopsis thaliana (Mouse-ear cress).